The following is a 426-amino-acid chain: Flotillin-1 (426 aa).

The protein belongs to the band 7/mec-2 family. Flotillin subfamily. Heterooligomeric complex of flotillins 1 and 2 and caveolins 1 and 2. In terms of tissue distribution, expressed in brain and ventral nerve cord from stage 12-16 of embryogenesis.

Its subcellular location is the cell membrane. The protein localises to the membrane. It is found in the caveola. Functionally, may act as a scaffolding protein within caveolar membranes, functionally participating in formation of caveolae or caveolae-like vesicles. This is Flotillin-1 from Drosophila melanogaster (Fruit fly).